A 349-amino-acid chain; its full sequence is Protein-glutamate methylesterase/protein-glutamine glutaminase (349 aa).

In terms of domain architecture, Response regulatory spans 5–122; it reads RVLSVDDSAL…REGMLAYSEM (118 aa). Aspartate 56 carries the post-translational modification 4-aspartylphosphate. The CheB-type methylesterase domain occupies 152–344; it reads LLSSEKLIAI…QQMLAKISAG (193 aa). Residues serine 164, histidine 190, and aspartate 286 contribute to the active site.

Belongs to the CheB family. Phosphorylated by CheA. Phosphorylation of the N-terminal regulatory domain activates the methylesterase activity.

The protein localises to the cytoplasm. The catalysed reaction is [protein]-L-glutamate 5-O-methyl ester + H2O = L-glutamyl-[protein] + methanol + H(+). The enzyme catalyses L-glutaminyl-[protein] + H2O = L-glutamyl-[protein] + NH4(+). Its function is as follows. Involved in chemotaxis. Part of a chemotaxis signal transduction system that modulates chemotaxis in response to various stimuli. Catalyzes the demethylation of specific methylglutamate residues introduced into the chemoreceptors (methyl-accepting chemotaxis proteins or MCP) by CheR. Also mediates the irreversible deamidation of specific glutamine residues to glutamic acid. The protein is Protein-glutamate methylesterase/protein-glutamine glutaminase of Salmonella choleraesuis (strain SC-B67).